Here is a 344-residue protein sequence, read N- to C-terminus: 4-hydroxy-3-methylbut-2-en-1-yl diphosphate synthase (flavodoxin) (344 aa).

4 residues coordinate [4Fe-4S] cluster: cysteine 253, cysteine 256, cysteine 288, and glutamate 295.

This sequence belongs to the IspG family. [4Fe-4S] cluster serves as cofactor.

It catalyses the reaction (2E)-4-hydroxy-3-methylbut-2-enyl diphosphate + oxidized [flavodoxin] + H2O + 2 H(+) = 2-C-methyl-D-erythritol 2,4-cyclic diphosphate + reduced [flavodoxin]. It functions in the pathway isoprenoid biosynthesis; isopentenyl diphosphate biosynthesis via DXP pathway; isopentenyl diphosphate from 1-deoxy-D-xylulose 5-phosphate: step 5/6. Converts 2C-methyl-D-erythritol 2,4-cyclodiphosphate (ME-2,4cPP) into 1-hydroxy-2-methyl-2-(E)-butenyl 4-diphosphate. This is 4-hydroxy-3-methylbut-2-en-1-yl diphosphate synthase (flavodoxin) from Thermotoga maritima (strain ATCC 43589 / DSM 3109 / JCM 10099 / NBRC 100826 / MSB8).